Consider the following 1294-residue polypeptide: ATPase PglY (1294 aa).

The tract at residues 1205 to 1263 is disordered; that stretch reads TQAAATPPPAPAASQPTAGDLSLDTPTSDPRIPYTSQETPTSSGGAGTARTSGGRRTTA. Positions 1228-1244 are enriched in polar residues; sequence DTPTSDPRIPYTSQETP. Residues 1252–1263 show a composition bias toward low complexity; the sequence is TARTSGGRRTTA.

Functionally, BREX systems (bacteriophage exclusion) provide immunity against bacteriophage. Part of a type 2 BREX system. Previously called the phage growth limitation (Pgl) system, it confers protection against bacteriophage phiC31. The bacteria allows one cycle of phage infection, but subsequent cycles are impaired, protecting the original bacterial colony. The system undergoes high rates (10(-3) to 10(-4)) of phase reversion, i.e. loss and regain of phiC31 resistance. When the pglW-pglX-pglY-pglZ genes are transformed into a susceptible S.lividans (strain 1326) they confer resistance to infection by phage phiC31 and phiBT1; all 4 genes are necessary. In terms of biological role, hydrolyzes ATP but not AMP, ADP, GMP, GDP or GTP; activity is inhibited by the non-hydrolyzable ATP analog 5-adenylyl beta,gamma-imidodiphosphate. This chain is ATPase PglY, found in Streptomyces coelicolor (strain ATCC BAA-471 / A3(2) / M145).